The primary structure comprises 395 residues: MKRDYYEVLGVGRSATKDEIKKAYRKLAMKYHPDKNPDNSEAEEKFKEANEAYEVLSNDDKRRRYDQFGHAGVGSSASSQGGPFGGGGTGDLGDIFSAFNDMFGGGARGGGSPFGFEDVFSGGGGRRSRSAGVSGSDLKIRLKLSLEEIAKGVEKTLKIKKQVACDVCNGTGSKTGELETCPTCQGTGEVRQASKTMFGQFVNIAACPTCGGEGRVVKERCTACHGEGIKQGETTVKVNIPAGVEDGNYLTLRGQGNAGPRGGMNGDLIVVIEEVEHKIFARRGDDVVYNLTLSYADMVLGTKVDIPTLEGRVKMTVPPATQPNTVLRISAKGIGHLKAPGRGDHLVRVNVFVPKDPSHQDKELLKELNKSVHMVPDEKKEHEKGFYEKVKDIFS.

Residues 4 to 69 form the J domain; that stretch reads DYYEVLGVGR…DKRRRYDQFG (66 aa). Residues 152-233 form a CR-type zinc finger; the sequence is GVEKTLKIKK…CHGEGIKQGE (82 aa). Cys165, Cys168, Cys181, Cys184, Cys207, Cys210, Cys221, and Cys224 together coordinate Zn(2+). CXXCXGXG motif repeat units lie at residues 165–172, 181–188, 207–214, and 221–228; these read CDVCNGTG, CPTCQGTG, CPTCGGEG, and CTACHGEG.

The protein belongs to the DnaJ family. In terms of assembly, homodimer. Zn(2+) serves as cofactor.

The protein localises to the cytoplasm. Participates actively in the response to hyperosmotic and heat shock by preventing the aggregation of stress-denatured proteins and by disaggregating proteins, also in an autonomous, DnaK-independent fashion. Unfolded proteins bind initially to DnaJ; upon interaction with the DnaJ-bound protein, DnaK hydrolyzes its bound ATP, resulting in the formation of a stable complex. GrpE releases ADP from DnaK; ATP binding to DnaK triggers the release of the substrate protein, thus completing the reaction cycle. Several rounds of ATP-dependent interactions between DnaJ, DnaK and GrpE are required for fully efficient folding. Also involved, together with DnaK and GrpE, in the DNA replication of plasmids through activation of initiation proteins. The chain is Chaperone protein DnaJ from Prosthecochloris aestuarii (strain DSM 271 / SK 413).